The sequence spans 116 residues: uncharacterized protein (116 aa).

A helical transmembrane segment spans residues 52–72 (VFCSANSVPLYLLLLTSALHF).

It localises to the mitochondrion membrane. This is an uncharacterized protein from Arabidopsis thaliana (Mouse-ear cress).